The following is an 84-amino-acid chain: Small ribosomal subunit protein uS17 (84 aa).

Belongs to the universal ribosomal protein uS17 family. As to quaternary structure, part of the 30S ribosomal subunit.

One of the primary rRNA binding proteins, it binds specifically to the 5'-end of 16S ribosomal RNA. The polypeptide is Small ribosomal subunit protein uS17 (Clostridium beijerinckii (strain ATCC 51743 / NCIMB 8052) (Clostridium acetobutylicum)).